The chain runs to 513 residues: 2,3-bisphosphoglycerate-independent phosphoglycerate mutase (513 aa).

The Mn(2+) site is built by Asp-13 and Ser-63. The active-site Phosphoserine intermediate is Ser-63. Substrate contacts are provided by residues His-124, 154-155 (RD), Arg-186, Arg-192, 262-265 (RADR), and Lys-335. Mn(2+) is bound by residues Asp-402, His-406, Asp-443, His-444, and His-462.

Belongs to the BPG-independent phosphoglycerate mutase family. In terms of assembly, monomer. Requires Mn(2+) as cofactor.

The enzyme catalyses (2R)-2-phosphoglycerate = (2R)-3-phosphoglycerate. It functions in the pathway carbohydrate degradation; glycolysis; pyruvate from D-glyceraldehyde 3-phosphate: step 3/5. In terms of biological role, catalyzes the interconversion of 2-phosphoglycerate and 3-phosphoglycerate. The polypeptide is 2,3-bisphosphoglycerate-independent phosphoglycerate mutase (Photobacterium profundum (strain SS9)).